The chain runs to 533 residues: MKKRKSNAVNAAQVLESSVSPILEINYSDPLFTLAAHPTEPVLISGLVTGHVFCHRYDAEALEEKQSARREQLLLQEKEAFKKGKVSQISKSVSQSKNPWWTIIKDHTEVPQESGVVASWKTKRHKGSCRHAIFEPLESSVGENIFTVGTDHIIKKASSETGKVVGKVDVSLDFPNSNDSITKLCHSATNSCLLAGTENGHVLVYDSKNLGGSKLKYKVSSAHDDAVNHILAMPAVSAYHYLTLGSTTLSHIDIRKGIITQSDNQDDELLSMCFATDQINDGKNDTVLVGHGEGIVTIWKNSKNRFMDQLTRIKVNKEASIDAIIPTMNCDDDEMAASVWCGDSEGLLHRVNYKKGKVVETRVHSSSRGKYGAADEVGLLEIDYDYRLISAGMESLKIWSNEQNEEIALDESDDSDDESDSDNSEDDLSSGSLSDTASDEEIEENKEEEDEKEDKPVKIDHPLANRSKKGLVGVSKHVTKKKQIDINKLTKKGKEEEEEEQPQKKKPKKDQLSTKQLRNMQKHEHGIRRFDDL.

WD repeat units follow at residues 26 to 67, 84 to 130, 176 to 215, 264 to 309, and 372 to 409; these read NYSD…EKQS, GKVS…GSCR, NSNDSITKLCHSATNSCLLAGTENGHVLVYDSKNLGGSKL, NQDD…FMDQ, and GAADEVGLLEIDYDYRLISAGMESLKIWSNEQNEEIAL. Composition is skewed to acidic residues over residues 408–428 and 437–452; these read ALDESDDSDDESDSDNSEDDL and ASDEEIEENKEEEDEK. Residues 408–533 are disordered; the sequence is ALDESDDSDD…EHGIRRFDDL (126 aa). Composition is skewed to basic and acidic residues over residues 453–463 and 521–533; these read EDKPVKIDHPL and QKHEHGIRRFDDL.

This sequence belongs to the WD repeat WDR55 family.

Its subcellular location is the nucleus. It is found in the nucleolus. This Scheffersomyces stipitis (strain ATCC 58785 / CBS 6054 / NBRC 10063 / NRRL Y-11545) (Yeast) protein is WD repeat-containing protein JIP5 (JIP5).